A 29-amino-acid polypeptide reads, in one-letter code: MDILSLGWAALMTMFTFSLALTVWARNGF.

The chain crosses the membrane as a helical span at residues 3 to 23 (ILSLGWAALMTMFTFSLALTV).

It belongs to the PetN family. In terms of assembly, the 4 large subunits of the cytochrome b6-f complex are cytochrome b6, subunit IV (17 kDa polypeptide, PetD), cytochrome f and the Rieske protein, while the 4 small subunits are PetG, PetL, PetM and PetN. The complex functions as a dimer.

The protein resides in the plastid. The protein localises to the chloroplast thylakoid membrane. Its function is as follows. Component of the cytochrome b6-f complex, which mediates electron transfer between photosystem II (PSII) and photosystem I (PSI), cyclic electron flow around PSI, and state transitions. The protein is Cytochrome b6-f complex subunit 8 of Phaeodactylum tricornutum (strain CCAP 1055/1).